The primary structure comprises 227 residues: Lipoprotein-releasing system ATP-binding protein LolD (227 aa).

Positions 6–227 constitute an ABC transporter domain; that stretch reads LEMRGITKSY…RLDAGQLSDV (222 aa). Position 43-50 (43-50) interacts with ATP; the sequence is APSGAGKS.

The protein belongs to the ABC transporter superfamily. Lipoprotein translocase (TC 3.A.1.125) family. As to quaternary structure, the complex is composed of two ATP-binding proteins (LolD) and two transmembrane proteins (LolC and LolE).

Its subcellular location is the cell inner membrane. Functionally, part of the ABC transporter complex LolCDE involved in the translocation of mature outer membrane-directed lipoproteins, from the inner membrane to the periplasmic chaperone, LolA. Responsible for the formation of the LolA-lipoprotein complex in an ATP-dependent manner. This chain is Lipoprotein-releasing system ATP-binding protein LolD, found in Roseobacter denitrificans (strain ATCC 33942 / OCh 114) (Erythrobacter sp. (strain OCh 114)).